The primary structure comprises 59 residues: Cytochrome c oxidase subunit 9, mitochondrial (59 aa).

Topologically, residues 2–8 (TIAPITG) are mitochondrial matrix. A helical membrane pass occupies residues 9–44 (TIKRRVIMDIVLGFSLGGVMASYWWWGFHMDKINKR). Residues 45 to 56 (EKFYAELAERKK) are Mitochondrial intermembrane-facing. The propeptide at 57-59 (QEN) is removed in mature form.

This sequence belongs to the fungal cytochrome c oxidase subunit 7a family. In terms of assembly, component of the cytochrome c oxidase (complex IV, CIV), a multisubunit enzyme composed of 12 subunits. The complex is composed of a catalytic core of 3 subunits COX1, COX2 and COX3, encoded in the mitochondrial DNA, and 9 supernumerary subunits COX4, COX5A (or COX5B), COX6, COX7, COX8, COX9, COX12, COX13 and COX26, which are encoded in the nuclear genome. The complex exists as a monomer or a dimer and forms supercomplexes (SCs) in the inner mitochondrial membrane with a dimer of ubiquinol-cytochrome c oxidoreductase (cytochrome b-c1 complex, complex III, CIII), resulting in 2 different assemblies (supercomplexes III(2)IV and III(2)IV(2)).

It localises to the mitochondrion inner membrane. The protein operates within energy metabolism; oxidative phosphorylation. Component of the cytochrome c oxidase, the last enzyme in the mitochondrial electron transport chain which drives oxidative phosphorylation. The respiratory chain contains 3 multisubunit complexes succinate dehydrogenase (complex II, CII), ubiquinol-cytochrome c oxidoreductase (cytochrome b-c1 complex, complex III, CIII) and cytochrome c oxidase (complex IV, CIV), that cooperate to transfer electrons derived from NADH and succinate to molecular oxygen, creating an electrochemical gradient over the inner membrane that drives transmembrane transport and the ATP synthase. Cytochrome c oxidase is the component of the respiratory chain that catalyzes the reduction of oxygen to water. Electrons originating from reduced cytochrome c in the intermembrane space (IMS) are transferred via the dinuclear copper A center (CU(A)) of COX2 and heme A of COX1 to the active site in COX1, a binuclear center (BNC) formed by heme A3 and copper B (CU(B)). The BNC reduces molecular oxygen to 2 water molecules using 4 electrons from cytochrome c in the IMS and 4 protons from the mitochondrial matrix. The sequence is that of Cytochrome c oxidase subunit 9, mitochondrial (COX9) from Saccharomyces cerevisiae (strain ATCC 204508 / S288c) (Baker's yeast).